The primary structure comprises 536 residues: Testis-specific protein 10-interacting protein (536 aa).

3 disordered regions span residues Met1–Ser94, Ser185–Gly234, and Met246–Pro305. Residues Ser48 to Ser64 are compositionally biased toward low complexity. Residues Lys71 to Arg83 are compositionally biased toward basic residues. Residues Gln375–Ala451 are a coiled coil. The interval Gly491 to Asp536 is disordered.

This chain is Testis-specific protein 10-interacting protein (Tsga10ip), found in Rattus norvegicus (Rat).